Here is a 141-residue protein sequence, read N- to C-terminus: Hydroperoxide reductase (141 aa).

The protein belongs to the OsmC/Ohr family. Homodimer.

It is found in the cytoplasm. Functionally, reduces organic and inorganic peroxide substrates. Protects the cell against oxidative stress. In Mycoplasma genitalium (strain ATCC 33530 / DSM 19775 / NCTC 10195 / G37) (Mycoplasmoides genitalium), this protein is Hydroperoxide reductase.